Reading from the N-terminus, the 119-residue chain is Basic phospholipase A2 (119 aa).

7 disulfide bridges follow: C11–C72, C27–C118, C29–C45, C44–C100, C51–C93, C61–C86, and C79–C91. 3 residues coordinate Ca(2+): Y28, G30, and G32. H48 is an active-site residue. D49 contributes to the Ca(2+) binding site. An N-linked (GlcNAc...) asparagine glycan is attached at N82. D94 is a catalytic residue.

This sequence belongs to the phospholipase A2 family. Group I subfamily. D49 sub-subfamily. It depends on Ca(2+) as a cofactor. In terms of tissue distribution, expressed by the venom gland.

The protein localises to the secreted. The catalysed reaction is a 1,2-diacyl-sn-glycero-3-phosphocholine + H2O = a 1-acyl-sn-glycero-3-phosphocholine + a fatty acid + H(+). In terms of biological role, snake venom phospholipase A2 (PLA2) that shows weak myotoxicity and induces edema in mice. Shows no cytotoxicity in vitro. Has an anticoagulant effect in vitro. PLA2 catalyzes the calcium-dependent hydrolysis of the 2-acyl groups in 3-sn-phosphoglycerides. The sequence is that of Basic phospholipase A2 from Micrurus mipartitus (Red-tailed coral snake).